The following is a 294-amino-acid chain: Acetylglutamate kinase (294 aa).

Substrate-binding positions include 67–68, Arg89, and Asn191; that span reads GG.

Belongs to the acetylglutamate kinase family. ArgB subfamily.

Its subcellular location is the cytoplasm. It catalyses the reaction N-acetyl-L-glutamate + ATP = N-acetyl-L-glutamyl 5-phosphate + ADP. It functions in the pathway amino-acid biosynthesis; L-arginine biosynthesis; N(2)-acetyl-L-ornithine from L-glutamate: step 2/4. Its function is as follows. Catalyzes the ATP-dependent phosphorylation of N-acetyl-L-glutamate. This Methylobacillus flagellatus (strain ATCC 51484 / DSM 6875 / VKM B-1610 / KT) protein is Acetylglutamate kinase.